Reading from the N-terminus, the 100-residue chain is Large ribosomal subunit protein bL21 (100 aa).

The protein belongs to the bacterial ribosomal protein bL21 family. As to quaternary structure, part of the 50S ribosomal subunit. Contacts protein L20.

This protein binds to 23S rRNA in the presence of protein L20. This Mycoplasma mycoides subsp. mycoides SC (strain CCUG 32753 / NCTC 10114 / PG1) protein is Large ribosomal subunit protein bL21.